The chain runs to 146 residues: MMSMASTTASPFCPSPMPRGRKCTVRVQAGAAGADASDKSLEIMRKFSEQYARRSNTFFCSEKSVTAVVIKGLADHKDQLGAPLCPCRHYDDKAAEVAQGFWNCPCVPMRERKECHCMLFLTPDNDFAGQDQAITLEEIKDATSKI.

A chloroplast-targeting transit peptide spans 1 to 26 (MMSMASTTASPFCPSPMPRGRKCTVR). C85 serves as a coordination point for [4Fe-4S] cluster. The Nucleophile role is filled by C87. A disulfide bridge links C87 with C117. C104, C106, and C115 together coordinate [4Fe-4S] cluster.

Belongs to the ferredoxin thioredoxin reductase beta subunit family. As to quaternary structure, heterodimer of subunit A (variable subunit) and subunit B (catalytic subunit). Heterodimeric FTR forms a complex with ferredoxin and thioredoxin. Requires [4Fe-4S] cluster as cofactor.

It is found in the plastid. The protein localises to the chloroplast. It carries out the reaction [thioredoxin]-disulfide + 2 reduced [2Fe-2S]-[ferredoxin] + 2 H(+) = [thioredoxin]-dithiol + 2 oxidized [2Fe-2S]-[ferredoxin]. Catalytic subunit of the ferredoxin-thioredoxin reductase (FTR), which catalyzes the two-electron reduction of thioredoxins by the electrons provided by reduced ferredoxin. The polypeptide is Ferredoxin-thioredoxin reductase catalytic chain, chloroplastic (Oryza sativa subsp. japonica (Rice)).